Reading from the N-terminus, the 97-residue chain is Co-chaperonin GroES (97 aa).

It belongs to the GroES chaperonin family. As to quaternary structure, heptamer of 7 subunits arranged in a ring. Interacts with the chaperonin GroEL.

The protein resides in the cytoplasm. In terms of biological role, together with the chaperonin GroEL, plays an essential role in assisting protein folding. The GroEL-GroES system forms a nano-cage that allows encapsulation of the non-native substrate proteins and provides a physical environment optimized to promote and accelerate protein folding. GroES binds to the apical surface of the GroEL ring, thereby capping the opening of the GroEL channel. This is Co-chaperonin GroES from Gemmatimonas aurantiaca (strain DSM 14586 / JCM 11422 / NBRC 100505 / T-27).